The following is a 266-amino-acid chain: Probable sulfate transport system permease protein cysT (266 aa).

The next 7 membrane-spanning stretches (helical) occupy residues 12–32, 59–79, 91–111, 129–149, 181–201, 206–226, and 236–256; these read ILLF…FLLI, MAFY…WVLT, AAVD…LATV, IVFT…PFVI, VILP…FSRA, GSIV…SVLI, and LGAS…LLLI. The ABC transmembrane type-1 domain maps to 53 to 257; the sequence is YLLTVQMAFY…IALFTLLLIN (205 aa).

It belongs to the binding-protein-dependent transport system permease family. CysTW subfamily.

Its subcellular location is the plastid. It localises to the chloroplast membrane. Functionally, part of the ABC transporter complex cysAWTP (TC 3.A.1.6.1) involved in sulfate/thiosulfate import. Probably responsible for the translocation of the substrate across the membrane. In Chlorella vulgaris (Green alga), this protein is Probable sulfate transport system permease protein cysT (cysT).